A 353-amino-acid chain; its full sequence is Variable large protein 17 (353 aa).

An N-terminal signal peptide occupies residues 1 to 18 (MRKRISAIIMTLFMVLVS). The N-palmitoyl cysteine moiety is linked to residue cysteine 19. The S-diacylglycerol cysteine moiety is linked to residue cysteine 19. The tract at residues 332–353 (EDKSVEATNTAEATTSGQQAKN) is disordered. The span at 337-353 (EATNTAEATTSGQQAKN) shows a compositional bias: polar residues.

Belongs to the variable large protein (Vlp) family. Delta subfamily.

The protein resides in the cell outer membrane. Its function is as follows. The Vlp and Vsp proteins are antigenically distinct proteins, only one vlp or vsp gene is transcriptionally active at any one time. Switching between these genes is a mechanism of host immune response evasion. This Borrelia hermsii protein is Variable large protein 17.